The sequence spans 212 residues: Protein DEPP1 (212 aa).

3 disordered regions span residues 20–39, 49–79, and 113–176; these read EEML…SLDD, QPTS…GRPA, and QEKQ…SDLR. Basic and acidic residues predominate over residues 113 to 124; sequence QEKQPSQRDLPR.

As to expression, expressed in various tissues, including pancreas, placenta, ovary, testis and kidney.

It is found in the cytoplasm. Its subcellular location is the peroxisome. The protein localises to the mitochondrion. Acts as a critical modulator of FOXO3-induced autophagy via increased cellular ROS. In Homo sapiens (Human), this protein is Protein DEPP1.